Consider the following 348-residue polypeptide: GTPase Obg (348 aa).

The Obg domain occupies 1-159 (MKFLDLAKVY…RTIWLRLKLI (159 aa)). Positions 160 to 327 (ADAGLLGLPN…VLRAVRAEID (168 aa)) constitute an OBG-type G domain. GTP contacts are provided by residues 166-173 (GLPNAGKS), 191-195 (FTTLH), 212-215 (DIPG), 279-282 (NKID), and 308-310 (SSV). 2 residues coordinate Mg(2+): Ser173 and Thr193.

The protein belongs to the TRAFAC class OBG-HflX-like GTPase superfamily. OBG GTPase family. In terms of assembly, monomer. It depends on Mg(2+) as a cofactor.

Its subcellular location is the cytoplasm. In terms of biological role, an essential GTPase which binds GTP, GDP and possibly (p)ppGpp with moderate affinity, with high nucleotide exchange rates and a fairly low GTP hydrolysis rate. Plays a role in control of the cell cycle, stress response, ribosome biogenesis and in those bacteria that undergo differentiation, in morphogenesis control. In Ruegeria sp. (strain TM1040) (Silicibacter sp.), this protein is GTPase Obg.